We begin with the raw amino-acid sequence, 259 residues long: Global transcriptional regulator CodY (259 aa).

The interval 1–155 (MTLLEKTRKI…GGTVVGMEIL (155 aa)) is GAF domain. Positions 203 to 222 (ASKIADRVGITRSVIVNALR) form a DNA-binding region, H-T-H motif.

It belongs to the CodY family.

Its subcellular location is the cytoplasm. In terms of biological role, DNA-binding global transcriptional regulator which is involved in the adaptive response to starvation and acts by directly or indirectly controlling the expression of numerous genes in response to nutrient availability. During rapid exponential growth, CodY is highly active and represses genes whose products allow adaptation to nutrient depletion. This Listeria monocytogenes serotype 4b (strain CLIP80459) protein is Global transcriptional regulator CodY.